Here is a 1040-residue protein sequence, read N- to C-terminus: Multidrug resistance protein MdtB (1040 aa).

12 helical membrane passes run 16–36, 347–367, 369–389, 396–416, 440–460, 472–492, 537–557, 863–883, 888–908, 911–931, 968–988, and 998–1018; these read FIMRPVATTLLMVAILLAGII, LMMAIALVVMIIYLFLRNIPA, IIPGVAVPLSLIGTFAVMVFL, LTLMALTIATGFVVDDAIVVI, IGFTIISLTFSLIAVLIPLLF, FAITLAVAILISAVVSLTLTP, WLTLSVALSTLLLSVLLWVFI, LGSTVWLIVAAVVAMYIVLGI, FIHPITILSTLPTAGVGALLA, IAGSELDVIAIIGIILLIGIV, ILMTTLAALLGALPLMLSTGV, and IGMVGGLIVSQVLTLFTTPVI.

This sequence belongs to the resistance-nodulation-cell division (RND) (TC 2.A.6) family. MdtB subfamily. As to quaternary structure, part of a tripartite efflux system composed of MdtA, MdtB and MdtC. MdtB forms a heteromultimer with MdtC.

Its subcellular location is the cell inner membrane. The MdtABC tripartite complex confers resistance against novobiocin and deoxycholate. This is Multidrug resistance protein MdtB from Escherichia coli O9:H4 (strain HS).